The primary structure comprises 167 residues: Transcription antitermination protein NusB (167 aa).

The interval M1–R32 is disordered.

It belongs to the NusB family.

Involved in transcription antitermination. Required for transcription of ribosomal RNA (rRNA) genes. Binds specifically to the boxA antiterminator sequence of the ribosomal RNA (rrn) operons. The chain is Transcription antitermination protein NusB from Cupriavidus pinatubonensis (strain JMP 134 / LMG 1197) (Cupriavidus necator (strain JMP 134)).